The primary structure comprises 365 residues: Popy Class I histocompatibility antigen, A-1 alpha chain (365 aa).

The N-terminal stretch at Met-1 to Ala-24 is a signal peptide. The interval Gly-25–Gly-114 is alpha-1. Residues Gly-25–Ile-308 lie on the Extracellular side of the membrane. Asn-110 carries N-linked (GlcNAc...) asparagine glycosylation. Positions Gly-115–Thr-206 are alpha-2. Intrachain disulfides connect Cys-125–Cys-188 and Cys-227–Cys-283. The alpha-3 stretch occupies residues Asp-207–Trp-298. The Ig-like C1-type domain occupies Pro-209–Arg-297. Residues Glu-299–Ile-308 are connecting peptide. A helical membrane pass occupies residues Val-309–Trp-332. Over Arg-333–Val-365 the chain is Cytoplasmic. A disordered region spans residues Lys-340–Val-365. Position 343 is a phosphoserine (Ser-343). Positions Ser-343–Ser-359 are enriched in polar residues. At Tyr-344 the chain carries Phosphotyrosine. Phosphoserine occurs at positions 345, 349, 352, 356, and 359.

The protein belongs to the MHC class I family. As to quaternary structure, heterodimer of an alpha chain and a beta chain (beta-2-microglobulin).

It localises to the membrane. Functionally, involved in the presentation of foreign antigens to the immune system. The chain is Popy Class I histocompatibility antigen, A-1 alpha chain from Pongo pygmaeus (Bornean orangutan).